The chain runs to 592 residues: A-type ATP synthase subunit A (592 aa).

234–241 (GAFGTGKT) is a binding site for ATP.

The protein belongs to the ATPase alpha/beta chains family. In terms of assembly, has multiple subunits with at least A(3), B(3), C, D, E, F, H, I and proteolipid K(x).

It is found in the cell membrane. It carries out the reaction ATP + H2O + 4 H(+)(in) = ADP + phosphate + 5 H(+)(out). Component of the A-type ATP synthase that produces ATP from ADP in the presence of a proton gradient across the membrane. The A chain is the catalytic subunit. This is A-type ATP synthase subunit A from Nitrosopumilus maritimus (strain SCM1).